Here is a 214-residue protein sequence, read N- to C-terminus: Cdc42 effector protein 2 (214 aa).

At Ser-2 the chain carries N-acetylserine. One can recognise a CRIB domain in the interval 30 to 44; that stretch reads ISPPLGDFRHTIHIG. Residues Ser-31, Ser-101, Ser-137, Ser-141, and Ser-145 each carry the phosphoserine modification. The tract at residues 119–177 is disordered; it reads LTLPTAQAPPKPPRLHLESPQPSPQPSPQGAGNVDVWRIPEAGSPHNGMSPEPEAEEPF.

Belongs to the BORG/CEP family. Interacts with CDC42 and RHOQ in a GTP-dependent manner, and with SEPT7.

The protein localises to the endomembrane system. It localises to the cytoplasm. Its subcellular location is the cytoskeleton. Functionally, probably involved in the organization of the actin cytoskeleton. May act downstream of CDC42 to induce actin filament assembly leading to cell shape changes. Induces pseudopodia formation in fibroblasts in a CDC42-dependent manner. This chain is Cdc42 effector protein 2 (Cdc42ep2), found in Mus musculus (Mouse).